Here is a 681-residue protein sequence, read N- to C-terminus: PTS system glucose-specific EIICBA component (681 aa).

A PTS EIIC type-1 domain is found at 3 to 414; it reads KKLFGQLQRI…LKYKTPGRED (412 aa). 10 consecutive transmembrane segments (helical) span residues 16-36, 73-93, 126-146, 170-190, 199-219, 273-293, 303-323, 328-348, 355-375, and 383-403; these read LMLP…GTAM, MIFA…AAIA, ILGI…GALA, FVPI…ALIW, AFST…FGFI, FMQG…LAIY, VVAG…ITEP, FLFV…LSFL, LHLG…GILP, and VIPV…FLIV. The 82-residue stretch at 425–506 folds into the PTS EIIB type-1 domain; it reads TELPYAVLEA…QQIMNGQVVE (82 aa). Cys447 acts as the Phosphocysteine intermediate; for EIIB activity in catalysis. Residues 551-655 enclose the PTS EIIA type-1 domain; it reads DQVFSEKMMG…SDITPIIVTQ (105 aa). Residue His603 is the Tele-phosphohistidine intermediate; for EIIA activity of the active site.

Its subcellular location is the cell membrane. The catalysed reaction is N(pros)-phospho-L-histidyl-[protein] + D-glucose(out) = D-glucose 6-phosphate(in) + L-histidyl-[protein]. The phosphoenolpyruvate-dependent sugar phosphotransferase system (sugar PTS), a major carbohydrate active transport system, catalyzes the phosphorylation of incoming sugar substrates concomitantly with their translocation across the cell membrane. This system is involved in glucose transport. The chain is PTS system glucose-specific EIICBA component (ptsG) from Staphylococcus aureus (strain bovine RF122 / ET3-1).